Here is a 261-residue protein sequence, read N- to C-terminus: DNA repair protein RecO (261 aa).

The protein belongs to the RecO family.

In terms of biological role, involved in DNA repair and RecF pathway recombination. In Chlorobium phaeobacteroides (strain BS1), this protein is DNA repair protein RecO.